The primary structure comprises 247 residues: Probable transcriptional regulatory protein ECA2494 (247 aa).

Belongs to the TACO1 family.

The protein resides in the cytoplasm. The polypeptide is Probable transcriptional regulatory protein ECA2494 (Pectobacterium atrosepticum (strain SCRI 1043 / ATCC BAA-672) (Erwinia carotovora subsp. atroseptica)).